We begin with the raw amino-acid sequence, 735 residues long: FHF complex subunit HOOK-interacting protein 2B (735 aa).

The tract at residues Ser183–Gln229 is disordered. Low complexity predominate over residues Ser196 to Gly221.

The protein belongs to the FHIP family.

The polypeptide is FHF complex subunit HOOK-interacting protein 2B (fhip2b) (Danio rerio (Zebrafish)).